Consider the following 111-residue polypeptide: Phosphoribosyl-AMP cyclohydrolase (111 aa).

D80 contacts Mg(2+). C81 contacts Zn(2+). Mg(2+) contacts are provided by D82 and D84. Residues C97 and C104 each contribute to the Zn(2+) site.

This sequence belongs to the PRA-CH family. As to quaternary structure, homodimer. Requires Mg(2+) as cofactor. It depends on Zn(2+) as a cofactor.

It localises to the cytoplasm. It carries out the reaction 1-(5-phospho-beta-D-ribosyl)-5'-AMP + H2O = 1-(5-phospho-beta-D-ribosyl)-5-[(5-phospho-beta-D-ribosylamino)methylideneamino]imidazole-4-carboxamide. It participates in amino-acid biosynthesis; L-histidine biosynthesis; L-histidine from 5-phospho-alpha-D-ribose 1-diphosphate: step 3/9. Catalyzes the hydrolysis of the adenine ring of phosphoribosyl-AMP. The sequence is that of Phosphoribosyl-AMP cyclohydrolase from Mycobacterium marinum (strain ATCC BAA-535 / M).